We begin with the raw amino-acid sequence, 246 residues long: Cell division protein ZapD (246 aa).

This sequence belongs to the ZapD family. Interacts with FtsZ.

It is found in the cytoplasm. Functionally, cell division factor that enhances FtsZ-ring assembly. Directly interacts with FtsZ and promotes bundling of FtsZ protofilaments, with a reduction in FtsZ GTPase activity. The protein is Cell division protein ZapD of Vibrio vulnificus (strain CMCP6).